A 212-amino-acid chain; its full sequence is Large ribosomal subunit protein uL3 (212 aa).

Gln153 bears the N5-methylglutamine mark.

Belongs to the universal ribosomal protein uL3 family. As to quaternary structure, part of the 50S ribosomal subunit. Forms a cluster with proteins L14 and L19. Post-translationally, methylated by PrmB.

One of the primary rRNA binding proteins, it binds directly near the 3'-end of the 23S rRNA, where it nucleates assembly of the 50S subunit. The protein is Large ribosomal subunit protein uL3 of Acinetobacter baylyi (strain ATCC 33305 / BD413 / ADP1).